Here is a 555-residue protein sequence, read N- to C-terminus: Suppressor of tumorigenicity 7 protein-like (555 aa).

4 helical membrane-spanning segments follow: residues 32-52 (APWA…YAAL), 76-96 (FYFA…VFEW), 504-524 (LPFF…LALL), and 531-551 (LMVV…APSV).

This sequence belongs to the ST7 family.

It localises to the membrane. In Gallus gallus (Chicken), this protein is Suppressor of tumorigenicity 7 protein-like (ST7L).